The sequence spans 370 residues: Anhydro-N-acetylmuramic acid kinase (370 aa).

13 to 20 (GTSMDGID) contributes to the ATP binding site.

Belongs to the anhydro-N-acetylmuramic acid kinase family.

The enzyme catalyses 1,6-anhydro-N-acetyl-beta-muramate + ATP + H2O = N-acetyl-D-muramate 6-phosphate + ADP + H(+). It functions in the pathway amino-sugar metabolism; 1,6-anhydro-N-acetylmuramate degradation. Its pathway is cell wall biogenesis; peptidoglycan recycling. Catalyzes the specific phosphorylation of 1,6-anhydro-N-acetylmuramic acid (anhMurNAc) with the simultaneous cleavage of the 1,6-anhydro ring, generating MurNAc-6-P. Is required for the utilization of anhMurNAc either imported from the medium or derived from its own cell wall murein, and thus plays a role in cell wall recycling. This Rhizobium etli (strain ATCC 51251 / DSM 11541 / JCM 21823 / NBRC 15573 / CFN 42) protein is Anhydro-N-acetylmuramic acid kinase.